The primary structure comprises 207 residues: Small ribosomal subunit protein uS4c (207 aa).

Residues 92-156 enclose the S4 RNA-binding domain; sequence MRLDNILFRL…YQSIITKRIE (65 aa).

This sequence belongs to the universal ribosomal protein uS4 family. In terms of assembly, part of the 30S ribosomal subunit. Contacts protein S5. The interaction surface between S4 and S5 is involved in control of translational fidelity.

Its subcellular location is the plastid. It is found in the chloroplast. In terms of biological role, one of the primary rRNA binding proteins, it binds directly to 16S rRNA where it nucleates assembly of the body of the 30S subunit. Functionally, with S5 and S12 plays an important role in translational accuracy. The polypeptide is Small ribosomal subunit protein uS4c (rps4) (Equisetum pratense (Meadow horsetail)).